We begin with the raw amino-acid sequence, 495 residues long: Cytochrome P450 monooxygenase FrzC (495 aa).

The helical transmembrane segment at 8–28 (GLVVGLWVTYHILLGTYNVFF) threads the bilayer. Cys437 serves as a coordination point for heme.

This sequence belongs to the cytochrome P450 family. Requires heme as cofactor.

It is found in the membrane. It catalyses the reaction (S,S)-2,5-di-(p-hydroxybenzyl)piperazine + reduced [NADPH--hemoprotein reductase] + O2 = (1S,4S)-4-[(4-hydroxyphenyl)methyl]-2,5-diazaspiro[bicyclo[3.2.1]octane-6,1'-cyclohexane]-2',5'-dien-4'-one + oxidized [NADPH--hemoprotein reductase] + 2 H2O + H(+). Its pathway is secondary metabolite biosynthesis. In terms of biological role, cytochrome P450 monooxygenase; part of the gene cluster that mediates the biosynthesis of the alkaloid (-)-FR901483, a potent immunosuppressant that shows efficacy in animal models and a probable inhibitor of purine nucleotide biosynthesis by targeting phosphoribosylpyrophosphate amidotransferase (PPAT). Within the pathway, FrzC catalyzes the coupling between N10 and C1' to produce a 1,4-diazabicyclo[3.2.1]octane spiro-fused to a 2,5-cyclohexadienone. FrzC probably first catalyzes homolysis of the N-H bond to generate the N10 radical which is followed by an O-H abstraction to give the phenolic radical which can be delocalized to C1'. Radical coupling between N10 and C1' then forms. The biosynthesis of (-)-FR901483 starts with the condensation of two L-tyrosines to yield (S,S)-dityrosyl-piperazine. This process occurs in 3 steps with the non-canonical nonribosomal peptide synthetase FrzA catalyzing the reduction of L-tyrosine into L-tyrosinal, the spontaneous condensation of 2 L-tyrosinal units, and the subsequent reduction by the NmrA-like family domain-containing oxidoreductase FrzB. The cytochrome P450 monooxygenase FrzC then performs coupling between N10 and C1' to morph the piperazine into a 1,4-diazabicyclo[3.2.1]octane spiro-fused to a 2,5-cyclohexadienone. The dienone portion is further reduced to cyclohexanone by the flavin-dependent reductase FrzD. The methyltranserases (MTs) FrzE and FrzF are then involved in the methylation at the C10' amine and the C4 phenolic oxygen, respectively. The order of the two MTs appear to be interchangeable. Cleavage of the C9-N10' bond by the dioxygenase FrzG then leads to formation of a conjugated iminium. In addition to the oxidation of C9, an additional dehydrogenation between C7 and C8 can occur to give a likely shunt product. The next biosynthetic step is the intramolecular aldol condensation catalyzed by the newly identified aldolase FrzH to yield an aza-tricyclic product with the formation of a C9-C3' bond. The short-chain dehydrogenase/reductase FrzI then produces dephospho-(-)-FR901483 that is phosphorylated at C4'-OH into (-)-FR901483 by the phosphotransferase FrzJ. In Cladobotryum sp, this protein is Cytochrome P450 monooxygenase FrzC.